A 274-amino-acid polypeptide reads, in one-letter code: MKKTQTWIITCIYLQLLLFNPLVHTQGICSNRVTDDVKDVTKLVANLPKDYMITLKYVPGMDVLPSHCWISEMVEQLSVSLTDLLDKFSNISEGLSNYCIIDKLVKIVDDLVECMEEHSSENVKKSSKSPEPRQFTPEKFFGIFNKSIDAFKDLEIVASKMSECVISSTSSPEKDSRVSVTKPFMLPPVAASSLRNDSSSSNRKASNSIEDSSLQWAAVALPAFFSLVIGFAFGAFYWKKKQPNLTRTVENRQINEEDNEISMLQEKEREFQEV.

Positions 1–25 are cleaved as a signal peptide; sequence MKKTQTWIITCIYLQLLLFNPLVHT. Gln26 carries the pyrrolidone carboxylic acid modification. Over 26 to 215 the chain is Extracellular; the sequence is QGICSNRVTD…SNSIEDSSLQ (190 aa). 2 cysteine pairs are disulfide-bonded: Cys29-Cys114 and Cys68-Cys164. N-linked (GlcNAc...) asparagine glycans are attached at residues Asn90, Asn145, and Asn196. A helical membrane pass occupies residues 216–238; the sequence is WAAVALPAFFSLVIGFAFGAFYW. At 239-274 the chain is on the cytoplasmic side; the sequence is KKKQPNLTRTVENRQINEEDNEISMLQEKEREFQEV.

This sequence belongs to the SCF family. In terms of assembly, homodimer, non-covalently linked. A soluble form is produced by proteolytic processing of isoform 1 in the extracellular domain.

Its subcellular location is the cell membrane. It is found in the cytoplasm. The protein localises to the cytoskeleton. The protein resides in the cell projection. It localises to the lamellipodium. Its subcellular location is the filopodium. It is found in the secreted. Its function is as follows. Stimulates the proliferation of mast cells. Able to augment the proliferation of both myeloid and lymphoid hematopoietic progenitors in bone marrow culture. Also mediates cell-cell adhesion. Acts synergistically with other cytokines, probably interleukins. This chain is Kit ligand (KITLG), found in Bos taurus (Bovine).